Consider the following 442-residue polypeptide: Tryptophan synthase beta chain 2 (442 aa).

At lysine 122 the chain carries N6-(pyridoxal phosphate)lysine.

This sequence belongs to the TrpB family. Tetramer of two alpha and two beta chains. The cofactor is pyridoxal 5'-phosphate.

It carries out the reaction (1S,2R)-1-C-(indol-3-yl)glycerol 3-phosphate + L-serine = D-glyceraldehyde 3-phosphate + L-tryptophan + H2O. It functions in the pathway amino-acid biosynthesis; L-tryptophan biosynthesis; L-tryptophan from chorismate: step 5/5. Functionally, the beta subunit is responsible for the synthesis of L-tryptophan from indole and L-serine. The sequence is that of Tryptophan synthase beta chain 2 (trpB2) from Methanosarcina mazei (strain ATCC BAA-159 / DSM 3647 / Goe1 / Go1 / JCM 11833 / OCM 88) (Methanosarcina frisia).